A 549-amino-acid chain; its full sequence is CTP synthase (549 aa).

Residues 1-267 (MTKFVFVTGG…AAQVLSLLNL (267 aa)) are amidoligase domain. A CTP-binding site is contributed by Ser-13. Ser-13 contributes to the UTP binding site. Residues 14–19 (SIGKGI) and Asp-71 contribute to the ATP site. Asp-71 and Glu-141 together coordinate Mg(2+). Residues 148–150 (DIE), 188–193 (KTKPTQ), and Lys-224 contribute to the CTP site. Residues 188–193 (KTKPTQ) and Lys-224 each bind UTP. The Glutamine amidotransferase type-1 domain occupies 292–534 (EIAIVGKYVR…VQAARTHSSD (243 aa)). Gly-354 lines the L-glutamine pocket. Catalysis depends on Cys-381, which acts as the Nucleophile; for glutamine hydrolysis. Residues 382-385 (LGMQ), Glu-405, and Arg-462 contribute to the L-glutamine site. Catalysis depends on residues His-507 and Glu-509.

The protein belongs to the CTP synthase family. Homotetramer.

The catalysed reaction is UTP + L-glutamine + ATP + H2O = CTP + L-glutamate + ADP + phosphate + 2 H(+). The enzyme catalyses L-glutamine + H2O = L-glutamate + NH4(+). It carries out the reaction UTP + NH4(+) + ATP = CTP + ADP + phosphate + 2 H(+). It participates in pyrimidine metabolism; CTP biosynthesis via de novo pathway; CTP from UDP: step 2/2. Allosterically activated by GTP, when glutamine is the substrate; GTP has no effect on the reaction when ammonia is the substrate. The allosteric effector GTP functions by stabilizing the protein conformation that binds the tetrahedral intermediate(s) formed during glutamine hydrolysis. Inhibited by the product CTP, via allosteric rather than competitive inhibition. In terms of biological role, catalyzes the ATP-dependent amination of UTP to CTP with either L-glutamine or ammonia as the source of nitrogen. Regulates intracellular CTP levels through interactions with the four ribonucleotide triphosphates. The polypeptide is CTP synthase (Cyanothece sp. (strain PCC 7425 / ATCC 29141)).